Consider the following 369-residue polypeptide: Holliday junction branch migration complex subunit RuvB (369 aa).

The interval 1–21 (MHKNENNRLLGSVSLPDDPDR) is disordered. The interval 1–184 (MHKNENNRLL…FGIPIRLNFY (184 aa)) is large ATPase domain (RuvB-L). Residues L23, R24, G65, K68, T69, T70, 131–133 (EDY), R174, Y184, and R221 each bind ATP. T69 provides a ligand contact to Mg(2+). The interval 185-255 (TIEELEYIVK…IADTALSRLE (71 aa)) is small ATPAse domain (RuvB-S). The head domain (RuvB-H) stretch occupies residues 258–369 (HLGLDPLDRN…QKHLWEKDYD (112 aa)). The DNA site is built by R294, R313, and R318.

This sequence belongs to the RuvB family. In terms of assembly, homohexamer. Forms an RuvA(8)-RuvB(12)-Holliday junction (HJ) complex. HJ DNA is sandwiched between 2 RuvA tetramers; dsDNA enters through RuvA and exits via RuvB. An RuvB hexamer assembles on each DNA strand where it exits the tetramer. Each RuvB hexamer is contacted by two RuvA subunits (via domain III) on 2 adjacent RuvB subunits; this complex drives branch migration. In the full resolvosome a probable DNA-RuvA(4)-RuvB(12)-RuvC(2) complex forms which resolves the HJ.

Its subcellular location is the cytoplasm. It catalyses the reaction ATP + H2O = ADP + phosphate + H(+). The RuvA-RuvB-RuvC complex processes Holliday junction (HJ) DNA during genetic recombination and DNA repair, while the RuvA-RuvB complex plays an important role in the rescue of blocked DNA replication forks via replication fork reversal (RFR). RuvA specifically binds to HJ cruciform DNA, conferring on it an open structure. The RuvB hexamer acts as an ATP-dependent pump, pulling dsDNA into and through the RuvAB complex. RuvB forms 2 homohexamers on either side of HJ DNA bound by 1 or 2 RuvA tetramers; 4 subunits per hexamer contact DNA at a time. Coordinated motions by a converter formed by DNA-disengaged RuvB subunits stimulates ATP hydrolysis and nucleotide exchange. Immobilization of the converter enables RuvB to convert the ATP-contained energy into a lever motion, pulling 2 nucleotides of DNA out of the RuvA tetramer per ATP hydrolyzed, thus driving DNA branch migration. The RuvB motors rotate together with the DNA substrate, which together with the progressing nucleotide cycle form the mechanistic basis for DNA recombination by continuous HJ branch migration. Branch migration allows RuvC to scan DNA until it finds its consensus sequence, where it cleaves and resolves cruciform DNA. The polypeptide is Holliday junction branch migration complex subunit RuvB (Bartonella bacilliformis (strain ATCC 35685 / KC583 / Herrer 020/F12,63)).